The primary structure comprises 713 residues: MTLFKKIQWFCNLIRLRSYYKFLLLIAYTAFGAWLFRTYELQADIKRRSVFGNTTNLVRRQLAERWIEMHKDAVLRNDSALRFRRAAEAVEWLLDELNLSDHIRDLSEETPWTWTGAMFYAGQLYTTIGYGYPTTKTDEGRICTIFYALFGIPCFLMYLKIENAIEWKKDKQLGKRALKMHGLINDSFQSIGKTLSKKMKKYYKKLRRSRVGRILLPTRVTAMKDGFEDPEAAEERKKKPFPIPIAIIMLIIWICFSASMFCIWEDTWVFSSAVYFFIVSISTVGLGDMLFRTPDMMVFNFLLILVGLALLSMCFELITDRVAKWKQKRFDEHIKKVQKMAFQVFEKDPFIEEAPPLGIRMAPNLMQIAATHVSEEKRGFFAEFKDWFAGKVTDNVIQSKLEDSDDESDSEEALEEFDSPQIATVTANDLIVCSNGAATRRVSKQSYALSDISNLSNSKILPGNNYGQLLDRIKAMEKFKPKKNDLDSRMFAKFLENKKLAKILEQTELRELATVSCQTDLSGLVVQRRNPKGRHARIGSCSSQSTMSTLLPNKMHAPDEDSVMSFTFGDLKFDYKTEPFIDEYYIRESNHSIFDFDEDETVRIPQKMLISRPGMPPPPPSRPLNLASPLRTLLEKEQKYDEDPEIQLTPRRLNSLSDIQARKVKLGVDENLQHARLVCGLLPQDFDSPSTSTSTSMIDSGYELSKRDASTMA.

Residues 1–15 (MTLFKKIQWFCNLIR) are Cytoplasmic-facing. The helical transmembrane segment at 16 to 36 (LRSYYKFLLLIAYTAFGAWLF) threads the bilayer. 3 N-linked (GlcNAc...) asparagine glycosylation sites follow: N53, N77, and N98. Positions 112-132 (WTWTGAMFYAGQLYTTIGYGY) form an intramembrane region, pore-forming. Residues 142 to 162 (ICTIFYALFGIPCFLMYLKIE) form a helical membrane-spanning segment. The Cytoplasmic portion of the chain corresponds to 163–242 (NAIEWKKDKQ…AEERKKKPFP (80 aa)). The helical transmembrane segment at 243 to 263 (IPIAIIMLIIWICFSASMFCI) threads the bilayer. Residues 267–287 (TWVFSSAVYFFIVSISTVGLG) constitute an intramembrane region (pore-forming). Residues 298 to 318 (VFNFLLILVGLALLSMCFELI) form a helical membrane-spanning segment. Residues 319 to 713 (TDRVAKWKQK…LSKRDASTMA (395 aa)) are Cytoplasmic-facing.

The protein belongs to the two pore domain potassium channel (TC 1.A.1.8) family.

It is found in the membrane. This chain is TWiK family of potassium channels protein 12 (twk-12), found in Caenorhabditis elegans.